Here is a 1337-residue protein sequence, read N- to C-terminus: Protein HEG homolog 1 (1337 aa).

A signal peptide spans 1–31; it reads MATPRAPRWPPPSLLLLLLLPLLLLPPAAPG. Low complexity-rich tracts occupy residues 28–40 and 54–66; these read AAPG…PSPA and PGAG…PGVA. 6 disordered regions span residues 28–149, 175–211, 235–296, 313–675, 723–767, and 860–909; these read AAPG…SNMA, SSLL…GFLE, ASHP…QNPS, VPRT…PSPI, LIPS…TVSL, and EGNR…PQTT. The Extracellular portion of the chain corresponds to 32-1204; that stretch reads ARGSLPSPAH…GLNCGNPYQL (1173 aa). Positions 118–131 are enriched in polar residues; the sequence is TAQNARMSHSSSEG. A compositionally biased stretch (low complexity) spans 175-190; the sequence is SSLLSLESLPESPSSS. 4 stretches are compositionally biased toward polar residues: residues 195-206, 247-258, 283-296, and 340-361; these read RITPSQTESGTS, VLSQKRNSSGQE, IKNG…QNPS, and GITS…NSGL. Residues 470-480 are compositionally biased toward gly residues; the sequence is RGGGEDSGMGG. Composition is skewed to low complexity over residues 486–502 and 556–575; these read SSSS…LDSS and SYSE…DSPS. Composition is skewed to polar residues over residues 576 to 585 and 592 to 617; these read QAQPKQSSMS and AQSS…NMPN. Low complexity predominate over residues 637-675; it reads PSTQPSPSQPQPFSSALPSTRSPGSTSETTTSSPSPSPI. Polar residues-rich tracts occupy residues 725–742 and 751–763; these read PSNQ…QQEK and SLVS…TKAV. Over residues 868 to 884 the composition is skewed to low complexity; it reads PTTQPIPLTTSTTSAGE. The span at 885 to 896 shows a compositional bias: basic and acidic residues; it reads RTTELGRAEESS. Residues 897 to 909 are compositionally biased toward polar residues; it reads PSHFLTPSSPQTT. An EGF-like 1 domain is found at 941 to 979; it reads PVNSCTVNPCLHDGKCIVDLTGRGYRCVCPPAWQGENCS. Disulfide bonds link Cys-945/Cys-956, Cys-950/Cys-967, Cys-969/Cys-978, Cys-985/Cys-996, Cys-990/Cys-1005, and Cys-1007/Cys-1018. The EGF-like 2; calcium-binding domain maps to 981–1019; that stretch reads DVNECLSSPCPPLATCNNTQGSFTCRCPVGYQLEKGICN. Residue Asn-1093 is glycosylated (N-linked (GlcNAc...) asparagine). Residues 1205–1225 form a helical membrane-spanning segment; it reads ITVVIAAAGGGLLLILGVALI. Over 1226 to 1337 the chain is Cytoplasmic; the sequence is VTCCRKSKND…SDESRRRDYF (112 aa). Ser-1315 is subject to Phosphoserine.

In terms of assembly, interacts with CCM2 and KRIT1; KRIT1 markedly facilitates interaction with CCM2.

It localises to the cell membrane. The protein resides in the cell junction. In terms of biological role, receptor component of the CCM signaling pathway which is a crucial regulator of heart and vessel formation and integrity. May be acting by stabilizing endothelial cell junctions. The protein is Protein HEG homolog 1 (Heg1) of Mus musculus (Mouse).